Here is a 430-residue protein sequence, read N- to C-terminus: Adenylosuccinate synthetase (430 aa).

GTP contacts are provided by residues 13–19 and 41–43; these read GDEGKGK and GHT. Asp-14 serves as the catalytic Proton acceptor. Positions 14 and 41 each coordinate Mg(2+). Residues 14–17, 39–42, Thr-130, Arg-144, Gln-225, Thr-240, and Arg-304 each bind IMP; these read DEGK and NAGH. The active-site Proton donor is the His-42. A substrate-binding site is contributed by 300-306; sequence ASTGRPR. GTP-binding positions include Arg-306, 332 to 334, and 414 to 416; these read KLD and STG.

The protein belongs to the adenylosuccinate synthetase family. In terms of assembly, homodimer. The cofactor is Mg(2+).

It localises to the cytoplasm. The catalysed reaction is IMP + L-aspartate + GTP = N(6)-(1,2-dicarboxyethyl)-AMP + GDP + phosphate + 2 H(+). The protein operates within purine metabolism; AMP biosynthesis via de novo pathway; AMP from IMP: step 1/2. In terms of biological role, plays an important role in the de novo pathway of purine nucleotide biosynthesis. Catalyzes the first committed step in the biosynthesis of AMP from IMP. This Xanthomonas oryzae pv. oryzae (strain PXO99A) protein is Adenylosuccinate synthetase.